A 541-amino-acid polypeptide reads, in one-letter code: Long-chain-fatty-acid--CoA ligase (541 aa).

T184 provides a ligand contact to Mg(2+). ATP-binding residues include V231 and W234. Positions 302, 322, 323, and 327 each coordinate tetradecanoyl-AMP. Positions 323 and 327 each coordinate ATP. E328 contacts Mg(2+). Residues D418, K435, K439, and W444 each contribute to the ATP site. Tetradecanoyl-AMP is bound by residues D418, K435, and K439.

Belongs to the ATP-dependent AMP-binding enzyme family. In terms of assembly, forms a domain swapped homodimer. Requires Mg(2+) as cofactor.

It carries out the reaction a long-chain fatty acid + ATP + CoA = a long-chain fatty acyl-CoA + AMP + diphosphate. The catalysed reaction is tetradecanoate + ATP + CoA = tetradecanoyl-CoA + AMP + diphosphate. The enzyme catalyses hexadecanoate + ATP + CoA = hexadecanoyl-CoA + AMP + diphosphate. The protein operates within lipid metabolism; fatty acid metabolism. Functionally, catalyzes the esterification of a number of long chain fatty acids with CoA, resulting in the formation of long-chain fatty acyl-CoA. Myristate (C14) is the most efficiently processed fatty acid, followed by palmitate (C16). Also catalyzes the esterification of stearate (C18) and laurate (C12), but at lower efficiency. Does not catalyze the esterification of the unsaturated fatty acids mysteroleic and palmitoleic acids in vitro. This is Long-chain-fatty-acid--CoA ligase from Thermus thermophilus (strain ATCC 27634 / DSM 579 / HB8).